The sequence spans 775 residues: Tyrosine-protein phosphatase non-receptor type 12 (775 aa).

An N-acetylmethionine modification is found at methionine 1. At serine 19 the chain carries Phosphoserine. Residues 28 to 293 (FARDFMRLRR…ELVHRAIAQL (266 aa)) form the Tyrosine-protein phosphatase domain. Substrate is bound by residues aspartate 199, 231–237 (CSAGCGR), and glutamine 278. Cysteine 231 functions as the Phosphocysteine intermediate in the catalytic mechanism. The interval 322–341 (SSIDSEKQDSPPPKPPRTRS) is disordered. Residues serine 331, serine 434, serine 448, and serine 467 each carry the phosphoserine modification. The interaction with TGFB1I1 stretch occupies residues 344–437 (VEGDAKEEIL…KLERNLSFEI (94 aa)). A disordered region spans residues 462 to 775 (KIKSASSSVV…GPREPPSEWT (314 aa)). A Phosphothreonine modification is found at threonine 519. Phosphoserine is present on residues serine 550 and serine 567. Polar residues predominate over residues 558-573 (NHSQTLKTVSSTPNST). Residue threonine 569 is modified to Phosphothreonine. Position 596 is a phosphoserine (serine 596). Phosphothreonine is present on threonine 598. Serine 603, serine 606, serine 608, and serine 613 each carry phosphoserine. Residues 622–640 (TSISTASATVSPASSAESA) are compositionally biased toward low complexity. The residue at position 673 (serine 673) is a Phosphoserine. Residues 692–711 (VRPEWHELPNQEWSEQRESE) show a composition bias toward basic and acidic residues. Phosphoserine is present on serine 748. Residues 766-775 (GPREPPSEWT) are compositionally biased toward basic and acidic residues.

The protein belongs to the protein-tyrosine phosphatase family. Non-receptor class 4 subfamily. Interacts with PSTPIP1 and TGFB1I1. Interacts with PTK2B/PYK2. Interacts with LPXN. Interacts with SORBS2; this interaction greatly enhances WASF1 dephosphorylation and might mediate partial translocation to focal adhesion sites. Post-translationally, phosphorylated by STK24/MST3 and this results in inhibition of its activity.

The protein resides in the cytoplasm. Its subcellular location is the cell junction. The protein localises to the focal adhesion. It is found in the cell projection. It localises to the podosome. It carries out the reaction O-phospho-L-tyrosyl-[protein] + H2O = L-tyrosyl-[protein] + phosphate. Functionally, dephosphorylates a range of proteins, and thereby regulates cellular signaling cascades. Dephosphorylates cellular tyrosine kinases, such as ERBB2 and PTK2B/PYK2, and thereby regulates signaling via ERBB2 and PTK2B/PYK2. Selectively dephosphorylates ERBB2 phosphorylated at 'Tyr-1112', 'Tyr-1196', and/or 'Tyr-1248'. This Mus musculus (Mouse) protein is Tyrosine-protein phosphatase non-receptor type 12 (Ptpn12).